An 88-amino-acid polypeptide reads, in one-letter code: MKTLLLTLVVVTIVCLDLGNSFSCYKTPYVKSEPCAPGENLCYTKSWCDAFCSIRGKVIELGCAATCPPAEPKKDITCCSTDNCNTHP.

The N-terminal stretch at 1–21 is a signal peptide; sequence MKTLLLTLVVVTIVCLDLGNS. Intrachain disulfides connect Cys-24–Cys-42, Cys-35–Cys-63, Cys-48–Cys-52, Cys-67–Cys-78, and Cys-79–Cys-84.

This sequence belongs to the three-finger toxin family. Long-chain subfamily. Type II alpha-neurotoxin sub-subfamily. In terms of tissue distribution, expressed by the venom gland.

The protein resides in the secreted. In terms of biological role, binds with high affinity to muscular (alpha-1/CHRNA1) and neuronal (alpha-7/CHRNA7) nicotinic acetylcholine receptor (nAChR) and inhibits acetylcholine from binding to the receptor, thereby impairing neuromuscular and neuronal transmission. This chain is Long neurotoxin 31, found in Drysdalia coronoides (White-lipped snake).